The primary structure comprises 189 residues: MTHAPHSEVAQHVAEAAADHADSGVFPPFDPTYFASQLFWLTIAFVILYIALDRLILPKIKTTIEDRRDRIADDLDAAAQAKADAEAAGEAYEKSLAEARNKAHALAAKTRQTLDAEIAKETAAVEAELSAKQEASEAAIRKAKDKAFAEVRGIAATATAAVVSALAGVEVSEADAGKTVDGLIKAKEA.

A helical transmembrane segment spans residues 32–52 (TYFASQLFWLTIAFVILYIAL).

This sequence belongs to the ATPase B chain family. In terms of assembly, F-type ATPases have 2 components, F(1) - the catalytic core - and F(0) - the membrane proton channel. F(1) has five subunits: alpha(3), beta(3), gamma(1), delta(1), epsilon(1). F(0) has three main subunits: a(1), b(2) and c(10-14). The alpha and beta chains form an alternating ring which encloses part of the gamma chain. F(1) is attached to F(0) by a central stalk formed by the gamma and epsilon chains, while a peripheral stalk is formed by the delta and b chains.

Its subcellular location is the cell inner membrane. F(1)F(0) ATP synthase produces ATP from ADP in the presence of a proton or sodium gradient. F-type ATPases consist of two structural domains, F(1) containing the extramembraneous catalytic core and F(0) containing the membrane proton channel, linked together by a central stalk and a peripheral stalk. During catalysis, ATP synthesis in the catalytic domain of F(1) is coupled via a rotary mechanism of the central stalk subunits to proton translocation. In terms of biological role, component of the F(0) channel, it forms part of the peripheral stalk, linking F(1) to F(0). The protein is ATP synthase subunit b 1 of Maricaulis maris (strain MCS10) (Caulobacter maris).